The chain runs to 96 residues: Co-chaperonin GroES (96 aa).

The protein belongs to the GroES chaperonin family. Heptamer of 7 subunits arranged in a ring. Interacts with the chaperonin GroEL.

It is found in the cytoplasm. Functionally, together with the chaperonin GroEL, plays an essential role in assisting protein folding. The GroEL-GroES system forms a nano-cage that allows encapsulation of the non-native substrate proteins and provides a physical environment optimized to promote and accelerate protein folding. GroES binds to the apical surface of the GroEL ring, thereby capping the opening of the GroEL channel. The chain is Co-chaperonin GroES from Leptospira interrogans serogroup Icterohaemorrhagiae serovar copenhageni (strain Fiocruz L1-130).